The sequence spans 317 residues: tRNA dimethylallyltransferase (317 aa).

ATP is bound at residue 14–21 (GPTAVGKT). 16-21 (TAVGKT) serves as a coordination point for substrate. Residues 39 to 42 (DSMQ) form an interaction with substrate tRNA region.

Belongs to the IPP transferase family. As to quaternary structure, monomer. Mg(2+) is required as a cofactor.

It carries out the reaction adenosine(37) in tRNA + dimethylallyl diphosphate = N(6)-dimethylallyladenosine(37) in tRNA + diphosphate. In terms of biological role, catalyzes the transfer of a dimethylallyl group onto the adenine at position 37 in tRNAs that read codons beginning with uridine, leading to the formation of N6-(dimethylallyl)adenosine (i(6)A). The polypeptide is tRNA dimethylallyltransferase (Bacillus cereus (strain ATCC 14579 / DSM 31 / CCUG 7414 / JCM 2152 / NBRC 15305 / NCIMB 9373 / NCTC 2599 / NRRL B-3711)).